Consider the following 281-residue polypeptide: Phosphatidylglycerol--prolipoprotein diacylglyceryl transferase (281 aa).

Helical transmembrane passes span 11–31 (IIFTIGPVSARWYGFMYVISF), 57–77 (LLYSIFLGSCIGGRIGYIIFY), 89–109 (VFYIWEGGMSFHGGLIGAIIV), 121–141 (ILEISDFITPLIPFGLGAGRI), 194–214 (PTQLYEFFLEGILLFFIIYFF), 222–242 (GSISGLFLIFYGLFRIFIEFF), and 255–275 (IITMGQILSLPMIIAGLIIMY). Arg-140 lines the a 1,2-diacyl-sn-glycero-3-phospho-(1'-sn-glycerol) pocket.

It belongs to the Lgt family.

The protein resides in the cell inner membrane. It carries out the reaction L-cysteinyl-[prolipoprotein] + a 1,2-diacyl-sn-glycero-3-phospho-(1'-sn-glycerol) = an S-1,2-diacyl-sn-glyceryl-L-cysteinyl-[prolipoprotein] + sn-glycerol 1-phosphate + H(+). It functions in the pathway protein modification; lipoprotein biosynthesis (diacylglyceryl transfer). Catalyzes the transfer of the diacylglyceryl group from phosphatidylglycerol to the sulfhydryl group of the N-terminal cysteine of a prolipoprotein, the first step in the formation of mature lipoproteins. This is Phosphatidylglycerol--prolipoprotein diacylglyceryl transferase from Buchnera aphidicola subsp. Acyrthosiphon pisum (strain 5A).